A 211-amino-acid chain; its full sequence is MTIQQELHTILVQGLDALSLELSERQQQQLVDYVLLMDKWNKAYNLTSVRDPKQMMVKHILDSLAIVPHLEGDNIIDVGTGPGLPGMPLAIAFPEKRFTLLDSLGKRVRFMTQSVHTLGLKNVTPVQSRVEAHNGEVPYDIVLSRAFASLKDMLHWCQHLVDSEGQFLALKGQFPQDEIEEVSDHFHVSKTENLTVPNLVGERHLVWLKKK.

S-adenosyl-L-methionine-binding positions include Gly-79, Leu-84, 130–131 (VE), and Arg-145.

The protein belongs to the methyltransferase superfamily. RNA methyltransferase RsmG family.

It is found in the cytoplasm. The enzyme catalyses guanosine(527) in 16S rRNA + S-adenosyl-L-methionine = N(7)-methylguanosine(527) in 16S rRNA + S-adenosyl-L-homocysteine. In terms of biological role, specifically methylates the N7 position of guanine in position 527 of 16S rRNA. The chain is Ribosomal RNA small subunit methyltransferase G from Alteromonas mediterranea (strain DSM 17117 / CIP 110805 / LMG 28347 / Deep ecotype).